The sequence spans 472 residues: Acetyl-CoA decarbonylase/synthase complex subunit beta 2 (472 aa).

The [Ni-Fe-S] cluster site is built by Cys189, Cys192, Cys278, and Cys280.

This sequence belongs to the CdhC family. In terms of assembly, monomer. The ACDS complex is made up of alpha, epsilon, beta, gamma and delta chains with a probable stoichiometry of (alpha(2)epsilon(2))(4)-beta(8)-(gamma(1)delta(1))(8) (Potential). [Ni-Fe-S] cluster is required as a cofactor.

The catalysed reaction is Co(I)-[corrinoid Fe-S protein] + acetyl-CoA + H(+) = methyl-Co(III)-[corrinoid Fe-S protein] + CO + CoA. The protein operates within one-carbon metabolism; methanogenesis from acetate. Functionally, part of a complex that catalyzes the reversible cleavage of acetyl-CoA, allowing growth on acetate as sole source of carbon and energy. The alpha-epsilon complex generates CO from CO(2), while the beta subunit (this protein) combines the CO with CoA and a methyl group to form acetyl-CoA. The methyl group, which is incorporated into acetyl-CoA, is transferred to the beta subunit by a corrinoid iron-sulfur protein (the gamma-delta complex). The sequence is that of Acetyl-CoA decarbonylase/synthase complex subunit beta 2 (cdhC2) from Methanosarcina thermophila.